The chain runs to 333 residues: Ribonucleoside-diphosphate reductase small chain B (333 aa).

The Fe cation site is built by D76, E107, and H110. Residue Y114 is part of the active site. The Fe cation site is built by E169, E203, and H206.

The protein belongs to the ribonucleoside diphosphate reductase small chain family. Heterodimer of a large and a small chain. Requires Fe cation as cofactor. As to expression, expressed in roots, rosette leaves, stems and flowers.

The protein localises to the cytoplasm. It catalyses the reaction a 2'-deoxyribonucleoside 5'-diphosphate + [thioredoxin]-disulfide + H2O = a ribonucleoside 5'-diphosphate + [thioredoxin]-dithiol. Functionally, provides the precursors necessary for DNA synthesis. Catalyzes the biosynthesis of deoxyribonucleotides from the corresponding ribonucleotides. The protein is Ribonucleoside-diphosphate reductase small chain B (RNR2B) of Arabidopsis thaliana (Mouse-ear cress).